Here is a 421-residue protein sequence, read N- to C-terminus: Medium-chain specific acyl-CoA dehydrogenase, mitochondrial (421 aa).

The transit peptide at 1–25 (MAAGFGRCCRVLRSISRFHWRSQHT) directs the protein to the mitochondrion. At lysine 69 the chain carries N6-acetyllysine; alternate. An N6-succinyllysine; alternate modification is found at lysine 69. 158–167 (YCVTEPGAGS) is a binding site for FAD. Serine 167 is an octanoyl-CoA binding site. Residue lysine 179 is modified to N6-succinyllysine. 191–193 (WIT) is an FAD binding site. Lysine 212, lysine 217, lysine 259, and lysine 271 each carry N6-acetyllysine; alternate. N6-succinyllysine; alternate is present on residues lysine 212, lysine 217, lysine 259, and lysine 271. Aspartate 278 contributes to the octanoyl-CoA binding site. An N6-acetyllysine modification is found at lysine 279. Arginine 281 provides a ligand contact to octanoyl-CoA. Lysine 301 bears the N6-acetyllysine mark. FAD is bound by residues 306–308 (RKT) and 316–317 (HQ). A Phosphothreonine modification is found at threonine 351. Residues 374 to 378 (QILGG) and 401 to 405 (EGTSQ) contribute to the FAD site. Glutamate 401 serves as a coordination point for octanoyl-CoA. Glutamate 401 serves as the catalytic Proton acceptor.

This sequence belongs to the acyl-CoA dehydrogenase family. In terms of assembly, homotetramer. Interacts with the heterodimeric electron transfer flavoprotein ETF. It depends on FAD as a cofactor. Post-translationally, acetylated. Could occur at proximity of the cofactor-binding sites and reduce the catalytic activity. Could be deacetylated by SIRT3.

The protein localises to the mitochondrion matrix. It catalyses the reaction a medium-chain 2,3-saturated fatty acyl-CoA + oxidized [electron-transfer flavoprotein] + H(+) = a medium-chain (2E)-enoyl-CoA + reduced [electron-transfer flavoprotein]. It carries out the reaction pentanoyl-CoA + oxidized [electron-transfer flavoprotein] + H(+) = (2E)-pentenoyl-CoA + reduced [electron-transfer flavoprotein]. The enzyme catalyses hexanoyl-CoA + oxidized [electron-transfer flavoprotein] + H(+) = (2E)-hexenoyl-CoA + reduced [electron-transfer flavoprotein]. The catalysed reaction is octanoyl-CoA + oxidized [electron-transfer flavoprotein] + H(+) = (2E)-octenoyl-CoA + reduced [electron-transfer flavoprotein]. It catalyses the reaction decanoyl-CoA + oxidized [electron-transfer flavoprotein] + H(+) = (2E)-decenoyl-CoA + reduced [electron-transfer flavoprotein]. It carries out the reaction dodecanoyl-CoA + oxidized [electron-transfer flavoprotein] + H(+) = (2E)-dodecenoyl-CoA + reduced [electron-transfer flavoprotein]. The enzyme catalyses tetradecanoyl-CoA + oxidized [electron-transfer flavoprotein] + H(+) = (2E)-tetradecenoyl-CoA + reduced [electron-transfer flavoprotein]. The catalysed reaction is oxidized [electron-transfer flavoprotein] + hexadecanoyl-CoA + H(+) = (2E)-hexadecenoyl-CoA + reduced [electron-transfer flavoprotein]. It participates in lipid metabolism; mitochondrial fatty acid beta-oxidation. Medium-chain specific acyl-CoA dehydrogenase is one of the acyl-CoA dehydrogenases that catalyze the first step of mitochondrial fatty acid beta-oxidation, an aerobic process breaking down fatty acids into acetyl-CoA and allowing the production of energy from fats. The first step of fatty acid beta-oxidation consists in the removal of one hydrogen from C-2 and C-3 of the straight-chain fatty acyl-CoA thioester, resulting in the formation of trans-2-enoyl-CoA. Electron transfer flavoprotein (ETF) is the electron acceptor that transfers electrons to the main mitochondrial respiratory chain via ETF-ubiquinone oxidoreductase (ETF dehydrogenase). Among the different mitochondrial acyl-CoA dehydrogenases, medium-chain specific acyl-CoA dehydrogenase acts specifically on acyl-CoAs with saturated 6 to 12 carbons long primary chains. The polypeptide is Medium-chain specific acyl-CoA dehydrogenase, mitochondrial (Homo sapiens (Human)).